The chain runs to 276 residues: Undecaprenyl-diphosphatase 1 (276 aa).

The next 8 membrane-spanning stretches (helical) occupy residues 1-21, 44-64, 87-107, 114-134, 150-170, 190-210, 222-242, and 251-271; these read MSLW…LFPV, QLLP…LWYF, GHLM…GLLL, VFHD…LLWL, LTFK…IPGF, AAEF…LLEL, DALL…RFLM, and LASF…WFMF.

It belongs to the UppP family.

The protein resides in the cell inner membrane. It carries out the reaction di-trans,octa-cis-undecaprenyl diphosphate + H2O = di-trans,octa-cis-undecaprenyl phosphate + phosphate + H(+). Its function is as follows. Catalyzes the dephosphorylation of undecaprenyl diphosphate (UPP). Confers resistance to bacitracin. The chain is Undecaprenyl-diphosphatase 1 from Burkholderia pseudomallei (strain 1106a).